Consider the following 159-residue polypeptide: Phosphopantetheine adenylyltransferase (159 aa).

Thr-9 lines the substrate pocket. ATP is bound by residues 9 to 10 (TF) and His-17. Residues Lys-41, Leu-73, and Arg-87 each contribute to the substrate site. ATP is bound by residues 88–90 (GLR), Glu-98, and 123–129 (YSFISST).

It belongs to the bacterial CoaD family. Homohexamer. Mg(2+) serves as cofactor.

The protein localises to the cytoplasm. The enzyme catalyses (R)-4'-phosphopantetheine + ATP + H(+) = 3'-dephospho-CoA + diphosphate. It functions in the pathway cofactor biosynthesis; coenzyme A biosynthesis; CoA from (R)-pantothenate: step 4/5. Its function is as follows. Reversibly transfers an adenylyl group from ATP to 4'-phosphopantetheine, yielding dephospho-CoA (dPCoA) and pyrophosphate. In Pseudomonas putida (strain GB-1), this protein is Phosphopantetheine adenylyltransferase.